A 621-amino-acid chain; its full sequence is tRNA uridine 5-carboxymethylaminomethyl modification enzyme MnmG (621 aa).

8 to 13 (GAGHAG) lines the FAD pocket. 269 to 283 (GPRYCPSIEDKIHRF) contributes to the NAD(+) binding site.

It belongs to the MnmG family. In terms of assembly, homodimer. Heterotetramer of two MnmE and two MnmG subunits. The cofactor is FAD.

The protein resides in the cytoplasm. NAD-binding protein involved in the addition of a carboxymethylaminomethyl (cmnm) group at the wobble position (U34) of certain tRNAs, forming tRNA-cmnm(5)s(2)U34. The polypeptide is tRNA uridine 5-carboxymethylaminomethyl modification enzyme MnmG (Chlorobium phaeovibrioides (strain DSM 265 / 1930) (Prosthecochloris vibrioformis (strain DSM 265))).